A 479-amino-acid polypeptide reads, in one-letter code: Ribosomal RNA small subunit methyltransferase F (479 aa).

S-adenosyl-L-methionine contacts are provided by residues A125–K131, E149, D176, and D194. The active-site Nucleophile is the C247.

The protein belongs to the class I-like SAM-binding methyltransferase superfamily. RsmB/NOP family.

It localises to the cytoplasm. The enzyme catalyses cytidine(1407) in 16S rRNA + S-adenosyl-L-methionine = 5-methylcytidine(1407) in 16S rRNA + S-adenosyl-L-homocysteine + H(+). Functionally, specifically methylates the cytosine at position 1407 (m5C1407) of 16S rRNA. This chain is Ribosomal RNA small subunit methyltransferase F, found in Salmonella enteritidis PT4 (strain P125109).